Here is a 442-residue protein sequence, read N- to C-terminus: tRNA modification GTPase MnmE (442 aa).

(6S)-5-formyl-5,6,7,8-tetrahydrofolate-binding residues include Arg24, Glu82, and Lys120. Residues 217 to 367 (GLHIVITGEP…LISLIKEKAE (151 aa)) form the TrmE-type G domain. GTP-binding positions include 227–232 (NVGKST), 246–252 (SEYAGTT), and 271–274 (DTAG). Residues Ser231 and Thr252 each coordinate Mg(2+). Residue Lys442 coordinates (6S)-5-formyl-5,6,7,8-tetrahydrofolate.

Belongs to the TRAFAC class TrmE-Era-EngA-EngB-Septin-like GTPase superfamily. TrmE GTPase family. Homodimer. Heterotetramer of two MnmE and two MnmG subunits. K(+) serves as cofactor.

Its subcellular location is the cytoplasm. Functionally, exhibits a very high intrinsic GTPase hydrolysis rate. Involved in the addition of a carboxymethylaminomethyl (cmnm) group at the wobble position (U34) of certain tRNAs, forming tRNA-cmnm(5)s(2)U34. In Wolbachia sp. subsp. Drosophila simulans (strain wRi), this protein is tRNA modification GTPase MnmE.